The following is a 524-amino-acid chain: Probable cytochrome P450 12c1, mitochondrial (524 aa).

Residue Cys-470 coordinates heme.

It belongs to the cytochrome P450 family. Requires heme as cofactor.

It is found in the mitochondrion membrane. In Drosophila melanogaster (Fruit fly), this protein is Probable cytochrome P450 12c1, mitochondrial (Cyp12c1).